Here is a 290-residue protein sequence, read N- to C-terminus: Cilia- and flagella-associated protein 298 (290 aa).

Tyrosine 264 carries the phosphotyrosine modification.

It belongs to the CFAP298 family. In terms of assembly, interacts with ZMYND10.

The protein resides in the cytoplasm. The protein localises to the cytoskeleton. Its subcellular location is the cilium basal body. Plays a role in motile cilium function, possibly by acting on outer dynein arm assembly. Seems to be important for initiation rather than maintenance of cilium motility. Required for correct positioning of the cilium at the apical cell surface, suggesting an additional role in the planar cell polarity (PCP) pathway. May suppress canonical Wnt signaling activity. The polypeptide is Cilia- and flagella-associated protein 298 (Homo sapiens (Human)).